We begin with the raw amino-acid sequence, 424 residues long: Putative pachytene checkpoint protein 2 (424 aa).

179-186 lines the ATP pocket; the sequence is GPPGTGKT.

It belongs to the AAA ATPase family. PCH2 subfamily.

Functionally, plays a key role in chromosome recombination during meiosis. The sequence is that of Putative pachytene checkpoint protein 2 (pch-2) from Caenorhabditis elegans.